The primary structure comprises 123 residues: Glutaredoxin-like protein (123 aa).

The 97-residue stretch at Ile-27–Lys-123 folds into the Glutaredoxin domain.

This sequence belongs to the glutaredoxin family.

This chain is Glutaredoxin-like protein (grxB), found in Dictyostelium discoideum (Social amoeba).